Here is a 454-residue protein sequence, read N- to C-terminus: Zinc finger protein 474 (454 aa).

The segment at 48–85 is disordered; it reads RGEKIKTNPRKNRPGTVILSKQSSRRIMSGSQPRPPVI. A compositionally biased stretch (polar residues) spans 66–79; sequence LSKQSSRRIMSGSQ. A C2HC/C3H-type 1 zinc finger spans residues 91–120; it reads GFRVCYICGREFGSQSLGIHEPQCLEKWRV. Zn(2+) contacts are provided by cysteine 95, cysteine 98, histidine 110, and cysteine 114. Positions 125 to 146 are disordered; that stretch reads LPKHLRRPEPSKPPPFSGSGSY. 5 consecutive C2HC/C3H-type zinc fingers follow at residues 162-191, 218-247, 281-310, 352-381, and 425-454; these read QLLP…KVEG, RTVI…KWKV, QLVS…QPSG, PTIV…KWHN, and QLVP…KVAK. Cysteine 166, cysteine 169, histidine 181, cysteine 185, cysteine 222, cysteine 225, histidine 237, and cysteine 241 together coordinate Zn(2+). The interval 256 to 282 is disordered; the sequence is FRQPLPQKPQPLLTGQPKHAGPRQGQL. Zn(2+)-binding residues include cysteine 285, cysteine 288, histidine 300, cysteine 304, cysteine 356, cysteine 359, histidine 371, cysteine 375, cysteine 429, cysteine 432, histidine 444, and cysteine 448. The disordered stretch occupies residues 299 to 345; it reads VHQRSCKAQPSGPKVQDLTLGSRGGLKESTNPKPQRNMAAPPVTDKP.

Zn(2+) serves as cofactor.

The sequence is that of Zinc finger protein 474 (ZNF474) from Bos taurus (Bovine).